We begin with the raw amino-acid sequence, 229 residues long: Large ribosomal subunit protein uL1 (229 aa).

It belongs to the universal ribosomal protein uL1 family. In terms of assembly, part of the 50S ribosomal subunit.

Functionally, binds directly to 23S rRNA. The L1 stalk is quite mobile in the ribosome, and is involved in E site tRNA release. In terms of biological role, protein L1 is also a translational repressor protein, it controls the translation of the L11 operon by binding to its mRNA. In Histophilus somni (strain 129Pt) (Haemophilus somnus), this protein is Large ribosomal subunit protein uL1.